We begin with the raw amino-acid sequence, 377 residues long: NADP-dependent oxidoreductase lnbE (377 aa).

NADP(+) is bound by residues 170-173, 257-263, and 293-295; these read GGNG, LTNPRVS, and SPV.

This sequence belongs to the NADP-dependent oxidoreductase L4BD family.

Its pathway is secondary metabolite biosynthesis. Its function is as follows. NADP-dependent oxidoreductase; part of the lnb gene cluster that mediates the biosynthesis of diastereomeric piperazines. Lna and lnb clusters encode sets of enzymes that produce overlapping sets of previously undescribed metabolites such as piperazinomycin-like metabolites or morpholine. The lna and lnb biosynthetic pathways appear to be part of a signaling network that controls the formation of sclerotia, a resilient overwintering structure. One primary function of the non-canonical nonribosomal peptide synthetases lnaA and lnbA consists in the reduction of L-tyrosine. The presence in the clusters of tailoring enzymes such as the oxidoreductases lnaB, lnbB, lnaE or lnbE, as well as of the cytochrome P450 monooxygenases lnaC, lnaD, or lnbC, might explain formation of various diastereomeric piperazines. The polypeptide is NADP-dependent oxidoreductase lnbE (Aspergillus flavus (strain ATCC 200026 / FGSC A1120 / IAM 13836 / NRRL 3357 / JCM 12722 / SRRC 167)).